The chain runs to 133 residues: Small ribosomal subunit protein uS19 (133 aa).

Belongs to the universal ribosomal protein uS19 family. Part of the 30S ribosomal subunit.

Protein S19 forms a complex with S13 that binds strongly to the 16S ribosomal RNA. This chain is Small ribosomal subunit protein uS19, found in Thermococcus kodakarensis (strain ATCC BAA-918 / JCM 12380 / KOD1) (Pyrococcus kodakaraensis (strain KOD1)).